A 334-amino-acid polypeptide reads, in one-letter code: Broad-range acid phosphatase DET1 (334 aa).

The active-site Tele-phosphohistidine intermediate is H32. Substrate contacts are provided by residues N38, 44 to 45, and R108; that span reads NG. The Proton donor/acceptor role is filled by E126. Substrate is bound by residues 168-171 and 195-205; these read LNNT and RVKDEPRIREQ. S248 bears the Phosphoserine mark.

This sequence belongs to the phosphoglycerate mutase family.

The protein localises to the cytoplasm. It is found in the nucleus. Metal-independent, broad-range acid phosphatase. Involved, either directly or indirectly, in the bidirectional transport of sterols between the endoplasmic reticulum and the plasma membrane. The chain is Broad-range acid phosphatase DET1 (DET1) from Saccharomyces cerevisiae (strain ATCC 204508 / S288c) (Baker's yeast).